Reading from the N-terminus, the 121-residue chain is ORF8 protein (121 aa).

The first 15 residues, 1–15 (MKFLVFLGIITTVAA), serve as a signal peptide directing secretion. Residues 19 to 121 (ECSLQSCTQH…HDVRVVLDFI (103 aa)) enclose the SARS ORF8 Ig-like domain. Disulfide bonds link cysteine 25/cysteine 90, cysteine 37/cysteine 102, and cysteine 61/cysteine 83. Residue asparagine 78 is glycosylated (N-linked (GlcNAc...) (complex) asparagine; by host).

In terms of assembly, homodimer. Interacts with host IL17RA. Interacts with host IL17RC. Interacts with host MHC-I. In terms of processing, glycosylated by the host when secreted via the conventional pathway. The glycosylated form cannot bind IL17A and would not participate in the cytokine storm.

The protein localises to the secreted. Functionally, plays a role in modulating the host immune response. May act as a secreted virokine by mimicking interleukin-17A (IL17A), and thereby binding to the IL17RA receptor, leading to activation of the IL17 pathway and increased secretion of pro-inflammatory factors. Contributes to the cytokine storm during SARS-CoV-2 infection when secreted by unconventional pathway. May act by down-regulating major histocompability complex class I (MHC-I) at cell surface. May inhibit expression of some members of the IFN-stimulated gene (ISG) family including hosts IGF2BP1/ZBP1, MX1 and MX2, and DHX58. This Severe acute respiratory syndrome coronavirus 2 (2019-nCoV) protein is ORF8 protein.